Consider the following 94-residue polypeptide: Protein translocase subunit SecE (94 aa).

Residues 1–32 are disordered; that stretch reads MTDAVGSIDMPDAQDEAPDSKKSRKGGKRGKK. Over residues 22–32 the composition is skewed to basic residues; it reads KSRKGGKRGKK. Residues 65 to 85 traverse the membrane as a helical segment; the sequence is TVVIIFVVIMIGLVTLIDYGF.

It belongs to the SecE/SEC61-gamma family. In terms of assembly, component of the Sec protein translocase complex. Heterotrimer consisting of SecY, SecE and SecG subunits. The heterotrimers can form oligomers, although 1 heterotrimer is thought to be able to translocate proteins. Interacts with the ribosome. Interacts with SecDF, and other proteins may be involved. Interacts with SecA.

Its subcellular location is the cell membrane. Essential subunit of the Sec protein translocation channel SecYEG. Clamps together the 2 halves of SecY. May contact the channel plug during translocation. This chain is Protein translocase subunit SecE, found in Streptomyces lividans.